The sequence spans 484 residues: tRNA sulfurtransferase (484 aa).

Residues 61 to 165 (TLLVELLGRI…NDKMMLIKAR (105 aa)) enclose the THUMP domain. ATP contacts are provided by residues 183 to 184 (LI), lysine 265, glycine 287, and glutamine 296. Cysteine 344 and cysteine 456 are disulfide-bonded. A Rhodanese domain is found at 404-484 (LSANEVILDI…DNVKVLNKIS (81 aa)). Residue cysteine 456 is the Cysteine persulfide intermediate of the active site.

It belongs to the ThiI family.

It localises to the cytoplasm. It catalyses the reaction [ThiI sulfur-carrier protein]-S-sulfanyl-L-cysteine + a uridine in tRNA + 2 reduced [2Fe-2S]-[ferredoxin] + ATP + H(+) = [ThiI sulfur-carrier protein]-L-cysteine + a 4-thiouridine in tRNA + 2 oxidized [2Fe-2S]-[ferredoxin] + AMP + diphosphate. It carries out the reaction [ThiS sulfur-carrier protein]-C-terminal Gly-Gly-AMP + S-sulfanyl-L-cysteinyl-[cysteine desulfurase] + AH2 = [ThiS sulfur-carrier protein]-C-terminal-Gly-aminoethanethioate + L-cysteinyl-[cysteine desulfurase] + A + AMP + 2 H(+). It functions in the pathway cofactor biosynthesis; thiamine diphosphate biosynthesis. In terms of biological role, catalyzes the ATP-dependent transfer of a sulfur to tRNA to produce 4-thiouridine in position 8 of tRNAs, which functions as a near-UV photosensor. Also catalyzes the transfer of sulfur to the sulfur carrier protein ThiS, forming ThiS-thiocarboxylate. This is a step in the synthesis of thiazole, in the thiamine biosynthesis pathway. The sulfur is donated as persulfide by IscS. In Histophilus somni (strain 2336) (Haemophilus somnus), this protein is tRNA sulfurtransferase.